The chain runs to 760 residues: MKTPWKVLLGLLGVAALVTIITVPIVLLSKDEAAADSRRTYSLADYLKSTFRVKSYSLWWVSDFEYLYKQENNILLLNAEHGNSSIFLENSTFESFGYHSVSPDRLFVLLEYNYVKQWRHSYTASYNIYDVNKRQLITEEKIPNNTQWITWSPEGHKLAYVWKNDIYVKVEPHLPSHRITSTGEENVIYNGITDWVYEEEVFGAYSALWWSPNNTFLAYAQFNDTGVPLIEYSFYSDESLQYPKTVWIPYPKAGAVNPTVKFFIVNIDSLSSSSSAAPIQIPAPASVARGDHYLCDVVWATEERISLQWLRRIQNYSVMAICDYDKINLTWNCPSEQQHVEMSTTGWVGRFRPAEPHFTSDGSSFYKIISDKDGYKHICHFPKDKKDCTFITKGAWEVISIEALTSDYLYYISNQYKEMPGGRNLYKIQLTDHTNVKCLSCDLNPERCQYYAVSFSKEAKYYQLGCWGPGLPLYTLHRSTDHKELRVLEDNSALDRMLQDVQMPSKKLDFIVLNETRFWYQMILPPHFDKSKKYPLLLDVYAGPCSQKADASFRLNWATYLASTENIIVASFDGRGSGYQGDKIMHAINRRLGTLEVEDQIEAARQFVKMGFVDSKRVAIWGWSYGGYVTSMVLGSGSGVFKCGIAVAPVSRWEYYDSVYTERYMGLPIPEDNLDHYRNSTVMSRAEHFKQVEYLLIHGTADDNVHFQQSAQISKALVDAGVDFQAMWYTDEDHGIASSTAHQHIYSHMSHFLQQCFSLH.

The Cytoplasmic portion of the chain corresponds to Met1–Lys6. The chain crosses the membrane as a helical; Signal-anchor for type II membrane protein span at residues Val7–Leu28. Residues Ser29–His760 lie on the Extracellular side of the membrane. Asn83, Asn90, Asn144, Asn213, Asn223, Asn315, and Asn328 each carry an N-linked (GlcNAc...) asparagine glycan. 4 cysteine pairs are disulfide-bonded: Cys322-Cys333, Cys379-Cys388, Cys438-Cys441, and Cys448-Cys466. An N-linked (GlcNAc...) asparagine glycan is attached at Asn514. Residue Ser624 is the Charge relay system of the active site. The cysteines at positions 643 and 756 are disulfide-linked. A glycan (N-linked (GlcNAc...) asparagine) is linked at Asn679. Catalysis depends on charge relay system residues Asp702 and His734.

It belongs to the peptidase S9B family. DPPIV subfamily. As to quaternary structure, monomer. Homodimer. Heterodimer with Seprase (FAP). Requires homodimerization for optimal dipeptidyl peptidase activity and T-cell costimulation. Found in a membrane raft complex, at least composed of BCL10, CARD11, DPP4 and IKBKB. Associates with collagen. Interacts with PTPRC; the interaction is enhanced in an interleukin-12-dependent manner in activated lymphocytes. Interacts (via extracellular domain) with ADA; does not inhibit its dipeptidyl peptidase activity. Interacts with CAV1 (via the N-terminus); the interaction is direct. Interacts (via cytoplasmic tail) with CARD11 (via PDZ domain); its homodimerization is necessary for interaction with CARD11. Interacts with IGF2R; the interaction is direct. Interacts with GPC3. Post-translationally, the soluble form (Dipeptidyl peptidase 4 soluble form also named SDPP) derives from the membrane form (Dipeptidyl peptidase 4 membrane form also named MDPP) by proteolytic processing. In terms of processing, N- and O-Glycosylated. Phosphorylated. Mannose 6-phosphate residues in the carbohydrate moiety are necessary for interaction with IGF2R in activated T-cells. Mannose 6-phosphorylation is induced during T-cell activation.

Its subcellular location is the secreted. It is found in the cell membrane. It localises to the apical cell membrane. The protein localises to the cell projection. The protein resides in the invadopodium membrane. Its subcellular location is the lamellipodium membrane. It is found in the cell junction. It localises to the membrane raft. It catalyses the reaction Release of an N-terminal dipeptide, Xaa-Yaa-|-Zaa-, from a polypeptide, preferentially when Yaa is Pro, provided Zaa is neither Pro nor hydroxyproline.. With respect to regulation, inhibited by GPC3 and diprotin A. In terms of biological role, cell surface glycoprotein receptor involved in the costimulatory signal essential for T-cell receptor (TCR)-mediated T-cell activation. Acts as a positive regulator of T-cell coactivation, by binding at least ADA, CAV1, IGF2R, and PTPRC. Its binding to CAV1 and CARD11 induces T-cell proliferation and NF-kappa-B activation in a T-cell receptor/CD3-dependent manner. Its interaction with ADA also regulates lymphocyte-epithelial cell adhesion. In association with FAP is involved in the pericellular proteolysis of the extracellular matrix (ECM), the migration and invasion of endothelial cells into the ECM. May be involved in the promotion of lymphatic endothelial cells adhesion, migration and tube formation. When overexpressed, enhanced cell proliferation, a process inhibited by GPC3. Also acts as a serine exopeptidase with a dipeptidyl peptidase activity that regulates various physiological processes by cleaving peptides in the circulation, including many chemokines, mitogenic growth factors, neuropeptides and peptide hormones. Removes N-terminal dipeptides sequentially from polypeptides having unsubstituted N-termini provided that the penultimate residue is proline. This is Dipeptidyl peptidase 4 (Dpp4) from Mus musculus (Mouse).